Here is a 248-residue protein sequence, read N- to C-terminus: DNA repair protein RecO (248 aa).

Belongs to the RecO family.

Functionally, involved in DNA repair and RecF pathway recombination. In Chelativorans sp. (strain BNC1), this protein is DNA repair protein RecO.